Reading from the N-terminus, the 446-residue chain is Probable D-serine dehydratase (446 aa).

Residue Lys-116 is modified to N6-(pyridoxal phosphate)lysine.

It belongs to the serine/threonine dehydratase family. DsdA subfamily. It depends on pyridoxal 5'-phosphate as a cofactor.

The enzyme catalyses D-serine = pyruvate + NH4(+). This chain is Probable D-serine dehydratase, found in Bacillus anthracis (strain CDC 684 / NRRL 3495).